Here is a 286-residue protein sequence, read N- to C-terminus: MAGAKEIRSKIASIKSTQKITSAMEKVAVSKMRKAQMRMAASRPYAERIRQVIGHLANANPEYRHPFMIERAVKRVGYVVVSSDRGLCGGLNTNLFKALVKDMAVNRENGVEIDLCVVGSKGAAFFRNFGGNVVAAISHLGEEPSINDLIGSVKVMLDAYLEGRIDRLSVVSNKFINTMTQQPTVEQLIPLVATPDQELKHHWDYLYEPDAKELLDGLMVRYVESQVYQAVVENNAAEQAARMIAMKNATDNAGDLISDLQLIYNKARQAAITQEISEIVGGAAAV.

It belongs to the ATPase gamma chain family. F-type ATPases have 2 components, CF(1) - the catalytic core - and CF(0) - the membrane proton channel. CF(1) has five subunits: alpha(3), beta(3), gamma(1), delta(1), epsilon(1). CF(0) has three main subunits: a, b and c.

It is found in the cell inner membrane. Functionally, produces ATP from ADP in the presence of a proton gradient across the membrane. The gamma chain is believed to be important in regulating ATPase activity and the flow of protons through the CF(0) complex. This is ATP synthase gamma chain from Pseudomonas fluorescens (strain SBW25).